The chain runs to 251 residues: Probable transcriptional regulatory protein CT1665 (251 aa).

This sequence belongs to the TACO1 family.

Its subcellular location is the cytoplasm. The protein is Probable transcriptional regulatory protein CT1665 of Chlorobaculum tepidum (strain ATCC 49652 / DSM 12025 / NBRC 103806 / TLS) (Chlorobium tepidum).